The primary structure comprises 97 residues: Essential MCU regulator, mitochondrial (97 aa).

Residues 1-35 constitute a mitochondrion transit peptide; it reads MIVPRLALPISLALQRVSRRVAEHPHNLRILQRHM. Residues 53 to 73 form a helical membrane-spanning segment; it reads PFGLLAIFCAVIPGLFVGATI.

This sequence belongs to the SMDT1/EMRE family.

It is found in the mitochondrion inner membrane. Functionally, essential regulatory subunit of the mitochondrial calcium uniporter MCU channel, a protein that mediates calcium uptake into mitochondria. The protein is Essential MCU regulator, mitochondrial of Drosophila melanogaster (Fruit fly).